We begin with the raw amino-acid sequence, 230 residues long: Leucyl/phenylalanyl-tRNA--protein transferase (230 aa).

Belongs to the L/F-transferase family.

The protein resides in the cytoplasm. The enzyme catalyses N-terminal L-lysyl-[protein] + L-leucyl-tRNA(Leu) = N-terminal L-leucyl-L-lysyl-[protein] + tRNA(Leu) + H(+). The catalysed reaction is N-terminal L-arginyl-[protein] + L-leucyl-tRNA(Leu) = N-terminal L-leucyl-L-arginyl-[protein] + tRNA(Leu) + H(+). It catalyses the reaction L-phenylalanyl-tRNA(Phe) + an N-terminal L-alpha-aminoacyl-[protein] = an N-terminal L-phenylalanyl-L-alpha-aminoacyl-[protein] + tRNA(Phe). Functionally, functions in the N-end rule pathway of protein degradation where it conjugates Leu, Phe and, less efficiently, Met from aminoacyl-tRNAs to the N-termini of proteins containing an N-terminal arginine or lysine. The protein is Leucyl/phenylalanyl-tRNA--protein transferase of Hamiltonella defensa subsp. Acyrthosiphon pisum (strain 5AT).